The sequence spans 240 residues: Adenosylcobinamide-GDP ribazoletransferase (240 aa).

The next 5 membrane-spanning stretches (helical) occupy residues 31 to 51 (LLYY…ASHL), 57 to 77 (APLH…ALHL), 109 to 129 (IAVV…WVLV), 133 to 153 (VGAQ…GLFL), and 185 to 205 (LFCL…FAWL).

It belongs to the CobS family. Mg(2+) is required as a cofactor.

The protein localises to the cell inner membrane. The catalysed reaction is alpha-ribazole + adenosylcob(III)inamide-GDP = adenosylcob(III)alamin + GMP + H(+). It catalyses the reaction alpha-ribazole 5'-phosphate + adenosylcob(III)inamide-GDP = adenosylcob(III)alamin 5'-phosphate + GMP + H(+). The protein operates within cofactor biosynthesis; adenosylcobalamin biosynthesis; adenosylcobalamin from cob(II)yrinate a,c-diamide: step 7/7. In terms of biological role, joins adenosylcobinamide-GDP and alpha-ribazole to generate adenosylcobalamin (Ado-cobalamin). Also synthesizes adenosylcobalamin 5'-phosphate from adenosylcobinamide-GDP and alpha-ribazole 5'-phosphate. This Pseudomonas putida (strain GB-1) protein is Adenosylcobinamide-GDP ribazoletransferase.